The chain runs to 161 residues: Lipid droplet assembly factor 1 (161 aa).

The Cytoplasmic segment spans residues 1 to 43 (MAKEEPQSISRDLQELQKKLSLLIDSFQNNSKVVAFMKSPVGQ). Residues 44–61 (YLDSHPFLAFTLLVFIVM) traverse the membrane as a helical segment. Topologically, residues 62–67 (SAVPVG) are lumenal. A helical membrane pass occupies residues 68-87 (FFLLIVVLTTLAALLGVIIL). The Cytoplasmic segment spans residues 88–93 (EGLVIS). Residues 94–110 (VGGFSLLCILCGLGFVS) form a helical membrane-spanning segment. The Lumenal segment spans residues 111–116 (LAMSGM). Residues 117-133 (MIASYVVVSSLISCWFS) form a helical membrane-spanning segment. At 134-161 (PRPLTQQNTSCDFLPAMKSAEFEGLYQE) the chain is on the cytoplasmic side.

The protein belongs to the LDAF1 family. Interacts with isoform 1 and isoform 3 of BSCL2/seipin to form an oligomeric complex. Expressed at high levels in the heart and skeletal muscle. Expressed at low levels in kidney, small intestine, lung and liver.

It localises to the endoplasmic reticulum membrane. The protein resides in the lipid droplet. In terms of biological role, plays an important role in the formation of lipid droplets (LD) which are storage organelles at the center of lipid and energy homeostasis. In association with BSCL2/seipin, defines the sites of LD formation in the endoplasmic reticulum. This Homo sapiens (Human) protein is Lipid droplet assembly factor 1.